Here is a 139-residue protein sequence, read N- to C-terminus: MKKGTVLNSDISSVISRLGHTDTLVVCDAGLPIPKSTTRIDMALTQGVPSFMQVLGVVTNEMQVEAAIIAEEIKQHNPQLHETLLTHLEQLQKHQGNTIEIRYTTHEQFKQQTAESQAVIRSGECSPYANIILCAGVTF.

His20 (proton donor) is an active-site residue. Residues Asp28, His106, and 128–130 (YAN) contribute to the substrate site.

The protein belongs to the RbsD / FucU family. RbsD subfamily. As to quaternary structure, homodecamer.

The protein resides in the cytoplasm. It carries out the reaction beta-D-ribopyranose = beta-D-ribofuranose. It functions in the pathway carbohydrate metabolism; D-ribose degradation; D-ribose 5-phosphate from beta-D-ribopyranose: step 1/2. Functionally, catalyzes the interconversion of beta-pyran and beta-furan forms of D-ribose. This is D-ribose pyranase from Escherichia coli (strain 55989 / EAEC).